We begin with the raw amino-acid sequence, 919 residues long: Leucine--tRNA ligase (919 aa).

The short motif at Pro-83 to His-93 is the 'HIGH' region element. The 'KMSKS' region signature appears at Lys-670 to Ser-674. Lys-673 provides a ligand contact to ATP.

This sequence belongs to the class-I aminoacyl-tRNA synthetase family.

It is found in the cytoplasm. The enzyme catalyses tRNA(Leu) + L-leucine + ATP = L-leucyl-tRNA(Leu) + AMP + diphosphate. This is Leucine--tRNA ligase from Psychrobacter cryohalolentis (strain ATCC BAA-1226 / DSM 17306 / VKM B-2378 / K5).